The primary structure comprises 395 residues: MNVLVINSGSSSIKYQLFAMPEAKVLAKGLLEKIGEEISALKHTAVEKGKEKKIEQKVADHKAGMSLIFSLLTDKEVGVIADMNEISAVGHRVVHGGEAFNKSILITDEAIKAIEACCDIAPLHNPAGLQGISACKEILKDVKMVGVFDTSFHQTIPDYAYMYAVPHEWYDKYKIRRYGFHGTSHKYVYGEFCKVTNKPNANVIVCHLGNGASVTAVKNGESIDTSMGLTPLEGLVMGTRSGDMDPAVPTFVMAKENLSAKEMDNILNKKSGLLGVSGVSNDMRNLEEAAKTNPKAELAITMFCYRVKKYIGAYMAALGHLDGIVFTGGIGENSAYIRGRILEGLDELGIKCDADKNSKARGCANFEKDGAAIKLYVIATDEEKAIAMDTYNLAK.

Residue N7 participates in Mg(2+) binding. K14 serves as a coordination point for ATP. R92 contacts substrate. D149 acts as the Proton donor/acceptor in catalysis. ATP is bound by residues 207-211, 282-284, and 329-333; these read HLGNG, DMR, and GIGEN. Mg(2+) is bound at residue E382.

The protein belongs to the acetokinase family. Homodimer. The cofactor is Mg(2+). It depends on Mn(2+) as a cofactor.

The protein localises to the cytoplasm. The enzyme catalyses acetate + ATP = acetyl phosphate + ADP. It functions in the pathway metabolic intermediate biosynthesis; acetyl-CoA biosynthesis; acetyl-CoA from acetate: step 1/2. In terms of biological role, catalyzes the formation of acetyl phosphate from acetate and ATP. Can also catalyze the reverse reaction. In Brachyspira hyodysenteriae (strain ATCC 49526 / WA1), this protein is Acetate kinase.